We begin with the raw amino-acid sequence, 657 residues long: Putative GreA-associated domains protein (657 aa).

Residues 1–152 (MDTRDLTAYS…EQEGNKEKAT (152 aa)) form the GRAD2 domain. The GRAD1 domain maps to 153 to 657 (EFYKKALYRF…TAGSFGTLWE (505 aa)).

This chain is Putative GreA-associated domains protein, found in Treponema pallidum (strain Nichols).